We begin with the raw amino-acid sequence, 205 residues long: Imidazoleglycerol-phosphate dehydratase (205 aa).

This sequence belongs to the imidazoleglycerol-phosphate dehydratase family.

The protein resides in the cytoplasm. The enzyme catalyses D-erythro-1-(imidazol-4-yl)glycerol 3-phosphate = 3-(imidazol-4-yl)-2-oxopropyl phosphate + H2O. It functions in the pathway amino-acid biosynthesis; L-histidine biosynthesis; L-histidine from 5-phospho-alpha-D-ribose 1-diphosphate: step 6/9. The chain is Imidazoleglycerol-phosphate dehydratase from Chloroflexus aggregans (strain MD-66 / DSM 9485).